Reading from the N-terminus, the 118-residue chain is MRVKRAVHAKKKRKKYLKAAKGYRGALSRRYKLAKQMYVRSKWYSYVGRKQKKRDMRKLWITRINIAARNEGLKYSELIHGLKLAGVSINRKMLSELAVNDPEAFKEYVKIAKEALAS.

Belongs to the bacterial ribosomal protein bL20 family.

In terms of biological role, binds directly to 23S ribosomal RNA and is necessary for the in vitro assembly process of the 50S ribosomal subunit. It is not involved in the protein synthesizing functions of that subunit. This is Large ribosomal subunit protein bL20 (rplT) from Thermotoga maritima (strain ATCC 43589 / DSM 3109 / JCM 10099 / NBRC 100826 / MSB8).